We begin with the raw amino-acid sequence, 250 residues long: Flavin-dependent thymidylate synthase (250 aa).

Residues 7-233 (LRVQLIAKTD…PAVFADFEVT (227 aa)) form the ThyX domain. FAD contacts are provided by residues S71, 95-97 (RHR), and Q103. DUMP contacts are provided by residues 92-95 (ELIR), 103-107 (QLSQR), and R172. The ThyX motif signature appears at 95 to 105 (RHRHFSYSQLS). FAD contacts are provided by residues 188 to 190 (NYR) and H194. A dUMP-binding site is contributed by R199. R199 functions as the Involved in ionization of N3 of dUMP, leading to its activation in the catalytic mechanism.

It belongs to the thymidylate synthase ThyX family. As to quaternary structure, homotetramer. The cofactor is FAD.

It catalyses the reaction dUMP + (6R)-5,10-methylene-5,6,7,8-tetrahydrofolate + NADPH + H(+) = dTMP + (6S)-5,6,7,8-tetrahydrofolate + NADP(+). It participates in pyrimidine metabolism; dTTP biosynthesis. Catalyzes the reductive methylation of 2'-deoxyuridine-5'-monophosphate (dUMP) to 2'-deoxythymidine-5'-monophosphate (dTMP) while utilizing 5,10-methylenetetrahydrofolate (mTHF) as the methyl donor, and NADPH and FADH(2) as the reductant. The chain is Flavin-dependent thymidylate synthase from Mycobacterium bovis (strain ATCC BAA-935 / AF2122/97).